A 581-amino-acid polypeptide reads, in one-letter code: DNA primase (581 aa).

A CHC2-type zinc finger spans residues 40–64 (CPFHNEKTPSFTVNGEKQFYHCFGC). The region spanning 259–341 (NRLLVVEGYM…GRQLRFMFLP (83 aa)) is the Toprim domain. E265, D309, and D311 together coordinate Mg(2+).

This sequence belongs to the DnaG primase family. In terms of assembly, monomer. Interacts with DnaB. Requires Zn(2+) as cofactor. It depends on Mg(2+) as a cofactor.

It carries out the reaction ssDNA + n NTP = ssDNA/pppN(pN)n-1 hybrid + (n-1) diphosphate.. Its function is as follows. RNA polymerase that catalyzes the synthesis of short RNA molecules used as primers for DNA polymerase during DNA replication. This chain is DNA primase, found in Shigella flexneri.